A 324-amino-acid chain; its full sequence is tRNA dimethylallyltransferase (324 aa).

17–24 (GPTASGKT) is an ATP binding site. 19-24 (TASGKT) contributes to the substrate binding site. Interaction with substrate tRNA regions lie at residues 42-45 (DSAL), 166-170 (QRIQR), 251-256 (RCVGYR), and 284-291 (KRQITWLR).

Belongs to the IPP transferase family. In terms of assembly, monomer. Mg(2+) is required as a cofactor.

It carries out the reaction adenosine(37) in tRNA + dimethylallyl diphosphate = N(6)-dimethylallyladenosine(37) in tRNA + diphosphate. Functionally, catalyzes the transfer of a dimethylallyl group onto the adenine at position 37 in tRNAs that read codons beginning with uridine, leading to the formation of N6-(dimethylallyl)adenosine (i(6)A). This chain is tRNA dimethylallyltransferase, found in Burkholderia lata (strain ATCC 17760 / DSM 23089 / LMG 22485 / NCIMB 9086 / R18194 / 383).